We begin with the raw amino-acid sequence, 433 residues long: Xylose isomerase (433 aa).

Residues His-99 and Asp-102 contribute to the active site. Mg(2+) is bound by residues Glu-230, Glu-266, His-269, Asp-294, Asp-305, Asp-307, and Asp-337.

This sequence belongs to the xylose isomerase family. As to quaternary structure, homotetramer. The cofactor is Mg(2+).

The protein resides in the cytoplasm. The catalysed reaction is alpha-D-xylose = alpha-D-xylulofuranose. The polypeptide is Xylose isomerase (Cereibacter sphaeroides (strain ATCC 17029 / ATH 2.4.9) (Rhodobacter sphaeroides)).